An 81-amino-acid polypeptide reads, in one-letter code: Short neurotoxin 2 (81 aa).

The signal sequence occupies residues 1-21 (MKTLLLTLVVVTIVCLDLGYT). Disulfide bonds link Cys24–Cys43, Cys38–Cys60, Cys62–Cys73, and Cys74–Cys79.

This sequence belongs to the three-finger toxin family. Short-chain subfamily. Type I alpha-neurotoxin sub-subfamily. In terms of tissue distribution, expressed by the venom gland.

The protein localises to the secreted. Functionally, binds to muscle nicotinic acetylcholine receptor (nAChR) and inhibit acetylcholine from binding to the receptor, thereby impairing neuromuscular transmission. This Hydrophis peronii (Spiny-headed seasnake) protein is Short neurotoxin 2.